A 601-amino-acid polypeptide reads, in one-letter code: Elongation factor 4 (601 aa).

The tr-type G domain occupies 7–189 (RNIRNFSIIA…AIVHRIPPPK (183 aa)). GTP contacts are provided by residues 19 to 24 (DHGKST) and 136 to 139 (NKID).

The protein belongs to the TRAFAC class translation factor GTPase superfamily. Classic translation factor GTPase family. LepA subfamily.

It is found in the cell inner membrane. It carries out the reaction GTP + H2O = GDP + phosphate + H(+). Required for accurate and efficient protein synthesis under certain stress conditions. May act as a fidelity factor of the translation reaction, by catalyzing a one-codon backward translocation of tRNAs on improperly translocated ribosomes. Back-translocation proceeds from a post-translocation (POST) complex to a pre-translocation (PRE) complex, thus giving elongation factor G a second chance to translocate the tRNAs correctly. Binds to ribosomes in a GTP-dependent manner. This chain is Elongation factor 4, found in Xanthomonas axonopodis pv. citri (strain 306).